The primary structure comprises 394 residues: Phosphopentomutase (394 aa).

Asp14, Asp287, His292, Asp328, His329, and His340 together coordinate Mn(2+).

It belongs to the phosphopentomutase family. The cofactor is Mn(2+).

It localises to the cytoplasm. It carries out the reaction 2-deoxy-alpha-D-ribose 1-phosphate = 2-deoxy-D-ribose 5-phosphate. The catalysed reaction is alpha-D-ribose 1-phosphate = D-ribose 5-phosphate. Its pathway is carbohydrate degradation; 2-deoxy-D-ribose 1-phosphate degradation; D-glyceraldehyde 3-phosphate and acetaldehyde from 2-deoxy-alpha-D-ribose 1-phosphate: step 1/2. In terms of biological role, isomerase that catalyzes the conversion of deoxy-ribose 1-phosphate (dRib-1-P) and ribose 1-phosphate (Rib-1-P) to deoxy-ribose 5-phosphate (dRib-5-P) and ribose 5-phosphate (Rib-5-P), respectively. The protein is Phosphopentomutase of Listeria innocua serovar 6a (strain ATCC BAA-680 / CLIP 11262).